A 442-amino-acid chain; its full sequence is 3-phosphoshikimate 1-carboxyvinyltransferase (442 aa).

The 3-phosphoshikimate site is built by Lys25, Ser26, and Arg30. Lys25 contributes to the phosphoenolpyruvate binding site. Residues Gly96 and Arg124 each contribute to the phosphoenolpyruvate site. 3-phosphoshikimate contacts are provided by Ser171, Ser172, Gln173, Ser203, Asp325, and Lys352. Gln173 provides a ligand contact to phosphoenolpyruvate. Asp325 functions as the Proton acceptor in the catalytic mechanism. Phosphoenolpyruvate contacts are provided by Arg356, Arg400, and Lys425.

This sequence belongs to the EPSP synthase family. As to quaternary structure, monomer.

Its subcellular location is the cytoplasm. It catalyses the reaction 3-phosphoshikimate + phosphoenolpyruvate = 5-O-(1-carboxyvinyl)-3-phosphoshikimate + phosphate. Its pathway is metabolic intermediate biosynthesis; chorismate biosynthesis; chorismate from D-erythrose 4-phosphate and phosphoenolpyruvate: step 6/7. Catalyzes the transfer of the enolpyruvyl moiety of phosphoenolpyruvate (PEP) to the 5-hydroxyl of shikimate-3-phosphate (S3P) to produce enolpyruvyl shikimate-3-phosphate and inorganic phosphate. In Bordetella pertussis (strain Tohama I / ATCC BAA-589 / NCTC 13251), this protein is 3-phosphoshikimate 1-carboxyvinyltransferase.